We begin with the raw amino-acid sequence, 57 residues long: Large ribosomal subunit protein bL32B (57 aa).

Belongs to the bacterial ribosomal protein bL32 family.

This Listeria innocua serovar 6a (strain ATCC BAA-680 / CLIP 11262) protein is Large ribosomal subunit protein bL32B (rpmF2).